A 357-amino-acid polypeptide reads, in one-letter code: Probable dual-specificity RNA methyltransferase RlmN (357 aa).

The active-site Proton acceptor is the E95. A Radical SAM core domain is found at 106 to 340 (NRDRHTVCVS…VSVREEKGTD (235 aa)). Cysteines 113 and 345 form a disulfide. [4Fe-4S] cluster contacts are provided by C120, C124, and C127. Residues 172–173 (GE), S204, 227–229 (SLH), and N302 contribute to the S-adenosyl-L-methionine site. Catalysis depends on C345, which acts as the S-methylcysteine intermediate.

The protein belongs to the radical SAM superfamily. RlmN family. It depends on [4Fe-4S] cluster as a cofactor.

It localises to the cytoplasm. The catalysed reaction is adenosine(2503) in 23S rRNA + 2 reduced [2Fe-2S]-[ferredoxin] + 2 S-adenosyl-L-methionine = 2-methyladenosine(2503) in 23S rRNA + 5'-deoxyadenosine + L-methionine + 2 oxidized [2Fe-2S]-[ferredoxin] + S-adenosyl-L-homocysteine. The enzyme catalyses adenosine(37) in tRNA + 2 reduced [2Fe-2S]-[ferredoxin] + 2 S-adenosyl-L-methionine = 2-methyladenosine(37) in tRNA + 5'-deoxyadenosine + L-methionine + 2 oxidized [2Fe-2S]-[ferredoxin] + S-adenosyl-L-homocysteine. Functionally, specifically methylates position 2 of adenine 2503 in 23S rRNA and position 2 of adenine 37 in tRNAs. The protein is Probable dual-specificity RNA methyltransferase RlmN of Desulfitobacterium hafniense (strain DSM 10664 / DCB-2).